The sequence spans 414 residues: Putative transporter YoaB (414 aa).

Residues 1–11 (MLDKIGIPKRL) are Cytoplasmic-facing. A helical membrane pass occupies residues 12–32 (AWGFLGVVLFMMGDGLEQGWL). Over 33–47 (SPFLIENGLTVQQSA) the chain is Extracellular. Residues 48–68 (SIFSIYGIALAIASWFSGVCL) traverse the membrane as a helical segment. At 69–75 (EAFGAKR) the chain is on the cytoplasmic side. A helical transmembrane segment spans residues 76–96 (TMFMGLLFYVIGTAAFIVFGF). At 97 to 107 (EQLNLPVMYVT) the chain is on the extracellular side. The chain crosses the membrane as a helical span at residues 108–128 (YFVKGLGYPLFAYSFLTWVIY). Topologically, residues 129–136 (RTPQSKLS) are cytoplasmic. A helical membrane pass occupies residues 137–157 (TAVGWFWIAYCLGMFVFGAWY). The Extracellular segment spans residues 158-167 (SSYAIKAFGY). The helical transmembrane segment at 168 to 188 (LNTLWSSIFWVCLGAFFALFI) threads the bilayer. The Cytoplasmic portion of the chain corresponds to 189–219 (NKDRFEKKKRKRSETAEELLKGVTILFTNPR). Residues 220 to 240 (VLTGGIIRIINSIGTYGFPVF) form a helical membrane-spanning segment. Residues 241 to 255 (LPMHMAQHGISTNVW) are Extracellular-facing. A helical transmembrane segment spans residues 256-276 (LQIWGTIFLGNIVFNLIFGIV). At 277-286 (GDKFGWKNTV) the chain is on the cytoplasmic side. Residues 287 to 307 (IWFGGVGCGIFTVLLYYAPVF) form a helical membrane-spanning segment. Over 308-316 (SGGSLAVVS) the chain is Extracellular. The helical transmembrane segment at 317-337 (VIGFIWGGLLAGYVPIGAIVP) threads the bilayer. Over 338–343 (TVAGKD) the chain is Cytoplasmic. The chain crosses the membrane as a helical span at residues 344–364 (KGAAMSVLNLAAGLSAFVGPA). Residues 365 to 375 (LAWLFIGLVGA) are Extracellular-facing. The helical transmembrane segment at 376-398 (QGVVWIFAALYLASAVLTKCIHI) threads the bilayer. At 399-414 (PEEKAVKEETSPQYAS) the chain is on the cytoplasmic side.

This sequence belongs to the major facilitator superfamily. Sugar transporter (TC 2.A.1.1) family. CsbX subfamily.

It is found in the cell membrane. This Bacillus subtilis (strain 168) protein is Putative transporter YoaB (yoaB).